The following is a 331-amino-acid chain: MGFGDFDTICQKAALPLCSLVGPASSISGATGIIPNCYARNIELANTIIFEGAASFVHIIALAMTVIMILHIRSKFTAVGRKEIITFFYIYMLLTMCSLVIDAGVVPPRSGPFPYFVAVQNGLTSALCTSLLVNGFVGFQLYEDGTALSVWLLRLTSTAMFAISFVISLLTFKSWGGLSPTNTVGMFVVLYILNAICIAVYLIMQLLLVMNTLEDRWPLGHIAFGLLVFICGQVLLYAFSDTICENVQHYLDGLFFTTICNLLAVMMVYKFWDYITKEDLEFSVGIKPNTWEVKEFLPEEDRRATVYQDTNSEYAGSMYHHRASAYNNHNY.

7 consecutive transmembrane segments (helical) span residues 52 to 72, 84 to 104, 122 to 142, 150 to 170, 184 to 204, 219 to 239, and 249 to 269; these read GAAS…ILHI, IITF…IDAG, GLTS…FQLY, VWLL…ISLL, VGMF…YLIM, LGHI…LYAF, and HYLD…MMVY.

It belongs to the CHS7 family. In terms of assembly, interacts with chs3.

The protein localises to the endoplasmic reticulum membrane. Its function is as follows. Chaperone required for the export of the chitin synthase chs3 from the endoplasmic reticulum. The sequence is that of Chitin synthase export chaperone (chs7) from Aspergillus oryzae (strain ATCC 42149 / RIB 40) (Yellow koji mold).